The chain runs to 214 residues: Probable septum site-determining protein MinC (214 aa).

It belongs to the MinC family. Interacts with MinD and FtsZ.

Functionally, cell division inhibitor that blocks the formation of polar Z ring septums. Rapidly oscillates between the poles of the cell to destabilize FtsZ filaments that have formed before they mature into polar Z rings. Prevents FtsZ polymerization. In Caldanaerobacter subterraneus subsp. tengcongensis (strain DSM 15242 / JCM 11007 / NBRC 100824 / MB4) (Thermoanaerobacter tengcongensis), this protein is Probable septum site-determining protein MinC.